An 874-amino-acid polypeptide reads, in one-letter code: MEVSLCILLFLLHFNEGIHGVRFTQKPFHQTVTQGNMVRLGCAFEGLSEPEIIWMKDGEKLFSTDQMYITLDPYHWETFHSVKSVQQQDAGKYWCEVEYHGAIISSEPAWITVAGVPHFGVEPEDVAAFAGESFNLTCAASGPPEPVEVLWWLGGEQNGDFTPSPSVLFVKGVNESIKFHCEPRNARGISVSRTGTVHIKARPDSLGRTGHHVSDFNITLTWSPGFTGHSQLSTCTIQLSRGPGEVKLPDVVVEVPPFQHVFEGLRSYSNYSVRVRCDNEVGSSPFSPWVDFHTPQAAPSAAPKNFTFDLSEQQLTLSWATLEQEELRGRLQEELRGRLLAYKLQWNQGGESQDPLLFKENVAHLSGAGRFFNATFQVAACTMAGCGPWSQPVLVMPVSAMQAQTQRGHMWVGLLFGLLVATMVGLLLIVLIRNRGKETQFGSAFAAQGAEVPVSFTAARSFNRQFPELPESTLDSLGINSDLKAKLQDVLIFERLLTLGRMLGKGEFGSVREAFLKSENNSGQKVAVKVLKTDINSSSDIEQCLKEAAYMKDFHHPNVIQLIGVSLHRRAQQRLPIPMVILPFMKHGDLHTFLLMSRLGDEPFTVSQQILIQFMLDIARGMEYLSNKNIIHRDLAARNCMLNENMSVCVADFGLSKKIYSGDYYRQGSVSKLPVKWIALESLADNVYTTQSDVWAFGVTMWEIMTRGQTPYPGVENSEIYEYLIKGERLKQPPDCPADIYEIMHSCWSPVPKCRPSFQHLIDQLELLWAKLNPAPVKEPLLYVNLEEEDGEQANSGTRSSEEPSWGVPWQCAGIEEDEKDWLMVSSGAALAIGGDYRYIIGPSVSAIDEESRHSEDGLSEDIREEEEDVIINV.

The signal sequence occupies residues 1-20; that stretch reads MEVSLCILLFLLHFNEGIHG. 2 Ig-like C2-type domains span residues 21-106 and 117-198; these read VRFT…IISS and PHFG…GTVH. At 21 to 411 the chain is on the extracellular side; that stretch reads VRFTQKPFHQ…QAQTQRGHMW (391 aa). Cysteine 42 and cysteine 95 are oxidised to a cystine. N-linked (GlcNAc...) asparagine glycosylation is found at asparagine 135, asparagine 174, asparagine 217, asparagine 270, asparagine 305, and asparagine 373. The cysteines at positions 138 and 181 are disulfide-linked. Fibronectin type-III domains lie at 202–297 and 299–403; these read RPDS…TPQA and PSAA…AMQA. The helical transmembrane segment at 412–432 threads the bilayer; sequence VGLLFGLLVATMVGLLLIVLI. At 433–874 the chain is on the cytoplasmic side; sequence RNRGKETQFG…EEEEDVIINV (442 aa). Residues 497–768 enclose the Protein kinase domain; it reads LTLGRMLGKG…QHLIDQLELL (272 aa). ATP contacts are provided by residues 503–511 and lysine 529; that span reads LGKGEFGSV. Catalysis depends on aspartate 634, which acts as the Proton acceptor. Position 665 is a phosphotyrosine; by autocatalysis (tyrosine 665).

Belongs to the protein kinase superfamily. Tyr protein kinase family. AXL/UFO subfamily.

It is found in the cell membrane. The enzyme catalyses L-tyrosyl-[protein] + ATP = O-phospho-L-tyrosyl-[protein] + ADP + H(+). May be involved in cell adhesion processes, particularly in the central nervous system. The protein is Tyrosine-protein kinase receptor TYRO3 (tyro3) of Danio rerio (Zebrafish).